The chain runs to 416 residues: Gamma-glutamyl phosphate reductase (416 aa).

This sequence belongs to the gamma-glutamyl phosphate reductase family.

The protein resides in the cytoplasm. It catalyses the reaction L-glutamate 5-semialdehyde + phosphate + NADP(+) = L-glutamyl 5-phosphate + NADPH + H(+). The protein operates within amino-acid biosynthesis; L-proline biosynthesis; L-glutamate 5-semialdehyde from L-glutamate: step 2/2. Its function is as follows. Catalyzes the NADPH-dependent reduction of L-glutamate 5-phosphate into L-glutamate 5-semialdehyde and phosphate. The product spontaneously undergoes cyclization to form 1-pyrroline-5-carboxylate. The polypeptide is Gamma-glutamyl phosphate reductase (Salmonella agona (strain SL483)).